The chain runs to 668 residues: Cyclin-dependent kinase 11.2 (668 aa).

A disordered region spans residues 1–265 (MSNYSTNGSR…EQWESMTENE (265 aa)). Composition is skewed to basic and acidic residues over residues 35–73 (KTKEERYRDKEKERDHERHHDRERRDDRYRKVDSRDHRD), 85–127 (YCRD…DSLR), and 140–163 (LPDDGKLFDRILDPNYKKKEKTVM). The segment covering 164–181 (EVEDVEMSPVEMLDEEEV) has biased composition (acidic residues). 2 stretches are compositionally biased toward basic and acidic residues: residues 197 to 212 (NEPEEKDYKSEGDPES) and 245 to 265 (PDDKYGKTPDKEQWESMTENE). One can recognise a Protein kinase domain in the interval 304-600 (YVILNVIAEG…ASEALQHDWF (297 aa)). Residues 310 to 318 (IAEGTYGEV) and K333 each bind ATP. Residue D432 is the Proton acceptor of the active site.

This sequence belongs to the protein kinase superfamily. CMGC Ser/Thr protein kinase family. CDC2/CDKX subfamily. As to expression, expressed in somatic cells and at varying levels throughout the germline (at protein level). Highly expressed in the germ line of hermaphrodites (at protein level).

The protein localises to the nucleus. Its subcellular location is the cytoplasm. It carries out the reaction L-seryl-[protein] + ATP = O-phospho-L-seryl-[protein] + ADP + H(+). The enzyme catalyses L-threonyl-[protein] + ATP = O-phospho-L-threonyl-[protein] + ADP + H(+). Probable cyclin-dependent kinase whose activity is most likely regulated by the cyclin cyl-1/Cylin-L. Acts partially redundantly with cdk-11.1 to ensure embryonic viability. In contrast to cdk-11.1, not essential for male and female fertility. This is Cyclin-dependent kinase 11.2 from Caenorhabditis elegans.